The following is a 308-amino-acid chain: MSAQKPGLHPRNRHQHRYDLAALCQTTPELTSFLIRTPAGEQSVDFANPQAVKALNKALLAHFYAVTHWDIPPGFLCPPVPGRADYIHHLADLLGETTGSIPAQATILDVGVGANCIYPLIGVHEYGWRFTGSEVSDAAMSSAQAIIQANTGLSRAIRLRRQKDPAAIFTGIIHKNEFYDATLCNPPFHDSAAAARAGSERKRRNLGQNKDDALNFGGQQQELWCEGGEVAFIKKMIAESQSFRRQVLWFTTLVSRGENLPPLYRALTEAGAVKVVKKEMAQGQKQSRFIAWTFMDDDQRRRFITRKR.

Belongs to the methyltransferase superfamily. METTL16/RlmF family.

Its subcellular location is the cytoplasm. It catalyses the reaction adenosine(1618) in 23S rRNA + S-adenosyl-L-methionine = N(6)-methyladenosine(1618) in 23S rRNA + S-adenosyl-L-homocysteine + H(+). Specifically methylates the adenine in position 1618 of 23S rRNA. In Salmonella dublin (strain CT_02021853), this protein is Ribosomal RNA large subunit methyltransferase F.